A 457-amino-acid chain; its full sequence is Non-structural protein V (457 aa).

2 disordered regions span residues 26 to 104 (KTYG…DPDD) and 193 to 403 (FVPK…MPIK). Composition is skewed to polar residues over residues 28–37 (YGRSSIQQPS) and 77–96 (DLSS…SNTR). Over residues 240-252 (SDDEDENQLEYED) the composition is skewed to acidic residues. The residue at position 257 (Ser257) is a Phosphoserine; by host. Positions 296–317 (FPEKEETPDVRRKDSLMQDSCK) are enriched in basic and acidic residues. Ser350 bears the Phosphoserine; by host mark. Residues His406, Cys425, Cys429, Cys441, Cys443, Cys446, Cys450, and Cys453 each coordinate Zn(2+).

Belongs to the paramyxoviruses V protein family. As to quaternary structure, interacts with host IFIH1/MDA5, DHX58/LGP2, STAT1 and STAT2.

It localises to the host cytoplasm. Functionally, plays an essential role in the inhibition of host immune response. Prevents the establishment of cellular antiviral state by blocking interferon-alpha/beta (IFN-alpha/beta) production and signaling pathway. Interacts with host IFIH1/MDA5 and DHX58/LGP2 to inhibit the transduction pathway involved in the activation of IFN-beta promoter, thus protecting the virus against cell antiviral state. Blocks the type I interferon signaling pathway by interacting with host STAT1 and STAT2 and thereby inhibiting their phosphorylation and subsequent nuclear translocation. Efficiently blocks the type II interferon signaling pathway. In Hendra virus (isolate Horse/Autralia/Hendra/1994), this protein is Non-structural protein V (P/V/C).